Consider the following 386-residue polypeptide: Putative aminotransferase YugH (386 aa).

The residue at position 234 (K234) is an N6-(pyridoxal phosphate)lysine.

The protein belongs to the class-I pyridoxal-phosphate-dependent aminotransferase family. The cofactor is pyridoxal 5'-phosphate.

It localises to the cytoplasm. The sequence is that of Putative aminotransferase YugH (yugH) from Bacillus subtilis (strain 168).